A 190-amino-acid polypeptide reads, in one-letter code: Elongation factor P (190 aa).

The protein belongs to the elongation factor P family.

The protein localises to the cytoplasm. The protein operates within protein biosynthesis; polypeptide chain elongation. Its function is as follows. Involved in peptide bond synthesis. Stimulates efficient translation and peptide-bond synthesis on native or reconstituted 70S ribosomes in vitro. Probably functions indirectly by altering the affinity of the ribosome for aminoacyl-tRNA, thus increasing their reactivity as acceptors for peptidyl transferase. The chain is Elongation factor P (efp) from Mycoplasma genitalium (strain ATCC 33530 / DSM 19775 / NCTC 10195 / G37) (Mycoplasmoides genitalium).